Reading from the N-terminus, the 283-residue chain is tRNA (guanine-N(1)-)-methyltransferase (283 aa).

Residues glycine 113 and 133–138 (IGDYVL) contribute to the S-adenosyl-L-methionine site.

This sequence belongs to the RNA methyltransferase TrmD family. In terms of assembly, homodimer.

It is found in the cytoplasm. The catalysed reaction is guanosine(37) in tRNA + S-adenosyl-L-methionine = N(1)-methylguanosine(37) in tRNA + S-adenosyl-L-homocysteine + H(+). Its function is as follows. Specifically methylates guanosine-37 in various tRNAs. This is tRNA (guanine-N(1)-)-methyltransferase from Parafrankia sp. (strain EAN1pec).